A 946-amino-acid chain; its full sequence is Rho GTPase-activating protein 4 (946 aa).

One can recognise an F-BAR domain in the interval 19–317; the sequence is TQVKEMRWQL…AVEALDPPGD (299 aa). A coiled-coil region spans residues 128 to 195; that stretch reads LAQRLSHIAE…REAERQEEKR (68 aa). Over residues 187 to 196 the composition is skewed to basic and acidic residues; the sequence is EAERQEEKRA. Disordered regions lie at residues 187 to 220 and 402 to 435; these read EAER…SLKK and LDSF…QQQE. 2 stretches are compositionally biased toward low complexity: residues 202 to 211 and 407 to 419; these read TTTAGATEAG and TSPS…STSS. Residues 507–695 enclose the Rho-GAP domain; the sequence is GDMEKFIQSS…TLIVQPDRVF (189 aa). One can recognise an SH3 domain in the interval 746–805; sequence EGVVEAVACFAYTGRTAQELSFRRGDVLRLHERASSDWWRGEHNGMRGLIPHKYITLPAG. Phosphoserine occurs at positions 860, 901, and 906. The disordered stretch occupies residues 885–946; sequence KTSVRQGLGP…QGLDTTPKPH (62 aa). Residues 901–910 are compositionally biased toward pro residues; the sequence is SPGPRSPKAP. Over residues 924-934 the composition is skewed to low complexity; that stretch reads GPGAPASPSAS.

Interacts with NCKAP1L. Predominantly in hematopoietic cells (spleen, thymus and leukocytes); low levels in placenta, lung and various fetal tissues.

It is found in the cytoplasm. In terms of biological role, inhibitory effect on stress fiber organization. May down-regulate Rho-like GTPase in hematopoietic cells. This chain is Rho GTPase-activating protein 4, found in Homo sapiens (Human).